Here is a 211-residue protein sequence, read N- to C-terminus: FMN-dependent NADH:quinone oxidoreductase (211 aa).

Residues 17 to 19 (SNS), 102 to 105 (MWNL), and 146 to 149 (SRGG) each bind FMN.

This sequence belongs to the azoreductase type 1 family. As to quaternary structure, homodimer. It depends on FMN as a cofactor.

The enzyme catalyses 2 a quinone + NADH + H(+) = 2 a 1,4-benzosemiquinone + NAD(+). It catalyses the reaction N,N-dimethyl-1,4-phenylenediamine + anthranilate + 2 NAD(+) = 2-(4-dimethylaminophenyl)diazenylbenzoate + 2 NADH + 2 H(+). Its function is as follows. Quinone reductase that provides resistance to thiol-specific stress caused by electrophilic quinones. In terms of biological role, also exhibits azoreductase activity. Catalyzes the reductive cleavage of the azo bond in aromatic azo compounds to the corresponding amines. The sequence is that of FMN-dependent NADH:quinone oxidoreductase from Macrococcus caseolyticus (strain JCSC5402) (Macrococcoides caseolyticum).